The chain runs to 419 residues: UDP-N-acetylglucosamine 1-carboxyvinyltransferase (419 aa).

22 to 23 (KN) is a binding site for phosphoenolpyruvate. R93 serves as a coordination point for UDP-N-acetyl-alpha-D-glucosamine. C117 functions as the Proton donor in the catalytic mechanism. 2-(S-cysteinyl)pyruvic acid O-phosphothioketal is present on C117. Residues D307 and I329 each coordinate UDP-N-acetyl-alpha-D-glucosamine.

This sequence belongs to the EPSP synthase family. MurA subfamily.

Its subcellular location is the cytoplasm. It carries out the reaction phosphoenolpyruvate + UDP-N-acetyl-alpha-D-glucosamine = UDP-N-acetyl-3-O-(1-carboxyvinyl)-alpha-D-glucosamine + phosphate. It functions in the pathway cell wall biogenesis; peptidoglycan biosynthesis. Functionally, cell wall formation. Adds enolpyruvyl to UDP-N-acetylglucosamine. The sequence is that of UDP-N-acetylglucosamine 1-carboxyvinyltransferase from Shewanella frigidimarina (strain NCIMB 400).